Here is a 271-residue protein sequence, read N- to C-terminus: Thiazole synthase (271 aa).

The active-site Schiff-base intermediate with DXP is the lysine 104. 1-deoxy-D-xylulose 5-phosphate-binding positions include glycine 165, alanine 192–glycine 193, and asparagine 214–threonine 215.

Belongs to the ThiG family. As to quaternary structure, homotetramer. Forms heterodimers with either ThiH or ThiS.

It is found in the cytoplasm. The catalysed reaction is [ThiS sulfur-carrier protein]-C-terminal-Gly-aminoethanethioate + 2-iminoacetate + 1-deoxy-D-xylulose 5-phosphate = [ThiS sulfur-carrier protein]-C-terminal Gly-Gly + 2-[(2R,5Z)-2-carboxy-4-methylthiazol-5(2H)-ylidene]ethyl phosphate + 2 H2O + H(+). It functions in the pathway cofactor biosynthesis; thiamine diphosphate biosynthesis. Catalyzes the rearrangement of 1-deoxy-D-xylulose 5-phosphate (DXP) to produce the thiazole phosphate moiety of thiamine. Sulfur is provided by the thiocarboxylate moiety of the carrier protein ThiS. In vitro, sulfur can be provided by H(2)S. The protein is Thiazole synthase of Burkholderia thailandensis (strain ATCC 700388 / DSM 13276 / CCUG 48851 / CIP 106301 / E264).